The primary structure comprises 576 residues: Immunoglobulin mu heavy chain (576 aa).

Gln-1 bears the Pyrrolidone carboxylic acid mark. Ig-like domains lie at Gln-1–Cys-97, Pro-132–Cys-212, Pro-236–Ser-334, Pro-352–Ser-442, and Pro-452–Asp-553. The segment at Gln-1–Val-124 is variable (V) domain, involved in antigen recognition. 3 cysteine pairs are disulfide-bonded: Cys-22–Cys-97, Cys-153–Cys-212, and Cys-259–Cys-320. N-linked (GlcNAc...) asparagine glycans are attached at residues Asn-74 and Asn-170. Residues Ser-125–Tyr-576 are constant (C) domain. N-linked (GlcNAc...) asparagine glycosylation is found at Asn-332, Asn-395, and Asn-402. Cystine bridges form between Cys-367-Cys-426 and Cys-474-Cys-536. N-linked (GlcNAc...) asparagine glycosylation occurs at Asn-563.

As to quaternary structure, immunoglobulins are composed of two identical heavy chains and two identical light chains; disulfide-linked. It is found almost exclusively as a homopentamer in the serum. Membrane-bound IgM molecules are non-covalently associated with heterodimer of CD79A and CD79B.

Its subcellular location is the secreted. The protein resides in the cell membrane. Functionally, immunoglobulins, also known as antibodies, are membrane-bound or secreted glycoproteins produced by B lymphocytes. In the recognition phase of humoral immunity, the membrane-bound immunoglobulins serve as receptors which, upon binding of a specific antigen, trigger the clonal expansion and differentiation of B lymphocytes into immunoglobulins-secreting plasma cells. Secreted immunoglobulins mediate the effector phase of humoral immunity, which results in the elimination of bound antigens. The antigen binding site is formed by the variable domain of one heavy chain, together with that of its associated light chain. Thus, each immunoglobulin has two antigen binding sites with remarkable affinity for a particular antigen. The variable domains are assembled by a process called V-(D)-J rearrangement and can then be subjected to somatic hypermutations which, after exposure to antigen and selection, allow affinity maturation for a particular antigen. IgM antibodies play an important role in primary defense mechanisms. They have been shown to be involved in early recognition of external invaders like bacteria and viruses, cellular waste and modified self, as well as in recognition and elimination of precancerous and cancerous lesions. The membrane-bound form is found in the majority of normal B cells alongside with IgD. Membrane-bound IgM induces the phosphorylation of CD79A and CD79B by the Src family of protein tyrosine kinases. It may cause death of cells by apoptosis. It is also found in soluble form, which represents about 30% of the total serum immunoglobulins where it is found almost exclusively as a homopentamer. After the antigen binds to the B cell receptor, the secreted form is secreted in large amounts (, PubMed:16895553). This Homo sapiens (Human) protein is Immunoglobulin mu heavy chain.